Here is a 173-residue protein sequence, read N- to C-terminus: Probable F-box protein At1g27490 (173 aa).

The 46-residue stretch at 1–46 (MEWSLPVDLQEEILSRVPAKSLARWKSTPKQWKGPISIEFLHLLRS) folds into the F-box domain.

The polypeptide is Probable F-box protein At1g27490 (Arabidopsis thaliana (Mouse-ear cress)).